Consider the following 1099-residue polypeptide: Exonuclease/helicase subunit RexB (1099 aa).

4 residues coordinate [4Fe-4S] cluster: Cys-766, Cys-1056, Cys-1059, and Cys-1065.

This sequence belongs to the helicase family. AddB/RexB type 2 subfamily. As to quaternary structure, heterodimer of RexA (AddA) and RexB. Mg(2+) is required as a cofactor. Requires [4Fe-4S] cluster as cofactor.

Functionally, the heterodimer acts both as an ATP-dependent DNA helicase and an ATP-dependent, dual-direction single-stranded exonuclease. Recognizes the L.lactis chi site (5'-GCGCGTG-3'), which stimulates homologous recombination. This subunit has 5'-&gt;3' exonuclease activity. In terms of biological role, the heterodimer acts as both an ATP-dependent DNA helicase and an ATP-dependent, dual-direction single-stranded exonuclease. Recognizes the chi site generating a DNA molecule suitable for the initiation of homologous recombination. This subunit has 5' -&gt; 3' nuclease activity but not helicase activity. The polypeptide is Exonuclease/helicase subunit RexB (Lactococcus lactis subsp. cremoris (strain MG1363)).